The sequence spans 420 residues: Glucose-1-phosphate adenylyltransferase (420 aa).

Alpha-D-glucose 1-phosphate contacts are provided by residues Tyr107, Gly172, 187-188 (EK), and Ser205.

Belongs to the bacterial/plant glucose-1-phosphate adenylyltransferase family. Homotetramer.

The enzyme catalyses alpha-D-glucose 1-phosphate + ATP + H(+) = ADP-alpha-D-glucose + diphosphate. It functions in the pathway glycan biosynthesis; glycogen biosynthesis. In terms of biological role, involved in the biosynthesis of ADP-glucose, a building block required for the elongation reactions to produce glycogen. Catalyzes the reaction between ATP and alpha-D-glucose 1-phosphate (G1P) to produce pyrophosphate and ADP-Glc. The polypeptide is Glucose-1-phosphate adenylyltransferase (Rhizobium radiobacter (Agrobacterium tumefaciens)).